The following is a 490-amino-acid chain: Betaine aldehyde dehydrogenase (490 aa).

Thr-26, Ile-27, and Asp-93 together coordinate K(+). Residue 150 to 152 (GAW) participates in NAD(+) binding. Lys-162 acts as the Charge relay system in catalysis. Residue 176–179 (KPSE) coordinates NAD(+). A K(+)-binding site is contributed by Val-180. Residue 230–233 (GVAS) coordinates NAD(+). Leu-246 serves as a coordination point for K(+). The Proton acceptor role is filled by Glu-252. 3 residues coordinate NAD(+): Gly-254, Cys-286, and Glu-387. The active-site Nucleophile is Cys-286. Cys-286 carries the post-translational modification Cysteine sulfenic acid (-SOH). The K(+) site is built by Lys-457 and Gly-460. Glu-464 acts as the Charge relay system in catalysis.

The protein belongs to the aldehyde dehydrogenase family. In terms of assembly, dimer of dimers. K(+) is required as a cofactor.

It catalyses the reaction betaine aldehyde + NAD(+) + H2O = glycine betaine + NADH + 2 H(+). It participates in amine and polyamine biosynthesis; betaine biosynthesis via choline pathway; betaine from betaine aldehyde: step 1/1. Involved in the biosynthesis of the osmoprotectant glycine betaine. Catalyzes the irreversible oxidation of betaine aldehyde to the corresponding acid. The sequence is that of Betaine aldehyde dehydrogenase from Escherichia coli (strain ATCC 8739 / DSM 1576 / NBRC 3972 / NCIMB 8545 / WDCM 00012 / Crooks).